The primary structure comprises 166 residues: MTDANGAPAEAAPQIRMQVLAQYVRDMSFENMVAQKGLQGGDVQPDIQVQVSLDARKRSVEHQYEVITKFKVTSKNKSGAAETLFLMELDYGGIFHVENVPEEQMHPFLLIECPRLLFPFVRRIISDVTRDGGFPPLNIDTVDFLALYRMELARRAEAQKAAQPVQ.

It belongs to the SecB family. Homotetramer, a dimer of dimers. One homotetramer interacts with 1 SecA dimer.

The protein localises to the cytoplasm. Its function is as follows. One of the proteins required for the normal export of preproteins out of the cell cytoplasm. It is a molecular chaperone that binds to a subset of precursor proteins, maintaining them in a translocation-competent state. It also specifically binds to its receptor SecA. In Cereibacter sphaeroides (strain ATCC 17025 / ATH 2.4.3) (Rhodobacter sphaeroides), this protein is Protein-export protein SecB.